Consider the following 1184-residue polypeptide: C5a peptidase (1184 aa).

An N-terminal signal peptide occupies residues 1–31 (MRKKQKLPFDKLAIALMSTSILLNAQSDIKA). Composition is skewed to polar residues over residues 33–52 (TVTE…QPTA) and 89–100 (AKTTDTPATSKA). The tract at residues 33–117 (TVTEDTPATE…PSQVKTLQEK (85 aa)) is disordered. Residues 99 to 581 (KATIRDLNDP…AGAVDAKKAS (483 aa)) enclose the Peptidase S8 domain. Residues aspartate 130, histidine 193, and serine 512 each act as charge relay system in the active site. Composition is skewed to basic and acidic residues over residues 1029–1054 (EGHS…KPEQ), 1061–1071 (PDKKPETKPEQ), 1078–1088 (PDKKPEAKPEQ), and 1095–1107 (PDKK…EKDS). The disordered stretch occupies residues 1029 to 1150 (EGHSNKPEQD…RDQLPTTNDK (122 aa)). 4 consecutive repeat copies span residues 1034-1067 (KPEQ…KPET), 1068-1084 (KPEQ…KPEA), 1085-1101 (KPEQ…KPET), and 1102-1118 (KPEK…TPQK). Residues 1034 to 1118 (KPEQDGSDQV…GQTPGKTPQK (85 aa)) are 4 X 17 AA tandem repeats. The segment covering 1109–1123 (GQTPGKTPQKGQPSR) has biased composition (polar residues). The short motif at 1144-1148 (LPTTN) is the LPXTG sorting signal element. Position 1147 is a pentaglycyl murein peptidoglycan amidated threonine (threonine 1147). A propeptide spans 1148 to 1184 (NDKDTNRLHLLKLVMTTFFFGLVAHIFKTKRQKETKK) (removed by sortase).

This sequence belongs to the peptidase S8 family. Cleaved by SpeB protease; leading to its degradation. Degradation by SpeB is probably strictly regulated to preserve integrity of C5a peptidase.

It localises to the secreted. It is found in the cell wall. The catalysed reaction is The primary cleavage site is at 67-His-|-Lys-68 in human C5a with a minor secondary cleavage site at 58-Ala-|-Ser-59.. Its function is as follows. This virulence factor of S.pyogenes specifically cleaves the human serum chemotaxin C5a at '68-Lys-|-Asp-69' bond near its C-terminus, destroying its ability to serve as a chemoattractant. This Streptococcus pyogenes serotype M6 (strain ATCC BAA-946 / MGAS10394) protein is C5a peptidase (scpA).